Consider the following 498-residue polypeptide: Glutamate--tRNA ligase (498 aa).

The 'HIGH' region motif lies at 12–22 (PSPTGHLHIGN). The 'KMSKS' region motif lies at 259–263 (KLSKR). Lys262 is an ATP binding site.

It belongs to the class-I aminoacyl-tRNA synthetase family. Glutamate--tRNA ligase type 1 subfamily. As to quaternary structure, monomer.

It localises to the cytoplasm. The catalysed reaction is tRNA(Glu) + L-glutamate + ATP = L-glutamyl-tRNA(Glu) + AMP + diphosphate. Catalyzes the attachment of glutamate to tRNA(Glu) in a two-step reaction: glutamate is first activated by ATP to form Glu-AMP and then transferred to the acceptor end of tRNA(Glu). The polypeptide is Glutamate--tRNA ligase (Limosilactobacillus fermentum (strain NBRC 3956 / LMG 18251) (Lactobacillus fermentum)).